The sequence spans 102 residues: Small ribosomal subunit protein uS10 (102 aa).

It belongs to the universal ribosomal protein uS10 family. As to quaternary structure, part of the 30S ribosomal subunit.

Functionally, involved in the binding of tRNA to the ribosomes. The protein is Small ribosomal subunit protein uS10 of Pyrococcus horikoshii (strain ATCC 700860 / DSM 12428 / JCM 9974 / NBRC 100139 / OT-3).